We begin with the raw amino-acid sequence, 258 residues long: Small ribosomal subunit protein mS23 (258 aa).

The segment covering 230 to 239 has biased composition (polar residues); sequence KKNSTKQSWA. The segment at 230–258 is disordered; the sequence is KKNSTKQSWAEATEEKEEQDSAEPEELKL. Residues 241 to 258 show a composition bias toward acidic residues; the sequence is ATEEKEEQDSAEPEELKL.

This sequence belongs to the mitochondrion-specific ribosomal protein mS23 family. Component of the mitochondrial small ribosomal subunit.

Its subcellular location is the mitochondrion. The chain is Small ribosomal subunit protein mS23 (RSM25) from Eremothecium gossypii (strain ATCC 10895 / CBS 109.51 / FGSC 9923 / NRRL Y-1056) (Yeast).